The sequence spans 97 residues: MKTLAFLVLCSLAAICLTSDASTGSQPASDNPADEGMFVERDQASAVVRQKRAAGQLSLTQLESLREVCELNLACEHMMDTEGIIAAYTAYYGPIPY.

Positions 1 to 18 (MKTLAFLVLCSLAAICLT) are cleaved as a signal peptide. Positions 19-52 (SDASTGSQPASDNPADEGMFVERDQASAVVRQKR) are excised as a propeptide. The region spanning 53–93 (AAGQLSLTQLESLREVCELNLACEHMMDTEGIIAAYTAYYG) is the Gla domain. Glutamate 63, glutamate 67, glutamate 70, and glutamate 76 together coordinate Ca(2+). Glutamate 63, glutamate 67, and glutamate 70 each carry 4-carboxyglutamate. Residues cysteine 69 and cysteine 75 are joined by a disulfide bond.

Belongs to the osteocalcin/matrix Gla protein family. In terms of processing, gamma-carboxyglutamate residues are formed by vitamin K dependent carboxylation by GGCX. These residues are essential for the binding of calcium.

The protein localises to the secreted. In terms of biological role, the carboxylated form is one of the main organic components of the bone matrix, which constitutes 1-2% of the total bone protein. The carboxylated form binds strongly to apatite and calcium. The sequence is that of Osteocalcin (bglap) from Sparus aurata (Gilthead sea bream).